Consider the following 321-residue polypeptide: MSKPIQMERGVKYRDADKMALIPIKNMPTEQKEVLRKPEWMKIKLPADSQRIQDIKAAMRKNNLHSVCEEASCPNLAECFNHGTATFMILGAICTRRCPFCDVAHGRPNAPEAEEPKKLAQTIHDMKLKYVVITSVDRDDLRDGGAQHFADCNREIRALNPHIKIETLVPDFRGRMEVALEALKDNPPDVFNHNLETAPRLYRKVRPGANYKWSLELLRQFKEQHPHVPTKSGLMMGLGETKEEIVEVLKDLRAHGVTMLTLGQYLAPSRHHLPVERYVPPAEFDELKEIALELGFTHAACGPFVRSSYHADLQAKGLEVK.

Positions 68, 73, 79, 94, 98, 101, and 308 each coordinate [4Fe-4S] cluster. The 218-residue stretch at 80-297 folds into the Radical SAM core domain; sequence FNHGTATFMI…KEIALELGFT (218 aa).

This sequence belongs to the radical SAM superfamily. Lipoyl synthase family. It depends on [4Fe-4S] cluster as a cofactor.

Its subcellular location is the cytoplasm. It carries out the reaction [[Fe-S] cluster scaffold protein carrying a second [4Fe-4S](2+) cluster] + N(6)-octanoyl-L-lysyl-[protein] + 2 oxidized [2Fe-2S]-[ferredoxin] + 2 S-adenosyl-L-methionine + 4 H(+) = [[Fe-S] cluster scaffold protein] + N(6)-[(R)-dihydrolipoyl]-L-lysyl-[protein] + 4 Fe(3+) + 2 hydrogen sulfide + 2 5'-deoxyadenosine + 2 L-methionine + 2 reduced [2Fe-2S]-[ferredoxin]. The protein operates within protein modification; protein lipoylation via endogenous pathway; protein N(6)-(lipoyl)lysine from octanoyl-[acyl-carrier-protein]: step 2/2. In terms of biological role, catalyzes the radical-mediated insertion of two sulfur atoms into the C-6 and C-8 positions of the octanoyl moiety bound to the lipoyl domains of lipoate-dependent enzymes, thereby converting the octanoylated domains into lipoylated derivatives. The polypeptide is Lipoyl synthase (Vibrio cholerae serotype O1 (strain ATCC 39541 / Classical Ogawa 395 / O395)).